Here is a 186-residue protein sequence, read N- to C-terminus: Adenine phosphoribosyltransferase (186 aa).

Belongs to the purine/pyrimidine phosphoribosyltransferase family. Homodimer.

Its subcellular location is the cytoplasm. The enzyme catalyses AMP + diphosphate = 5-phospho-alpha-D-ribose 1-diphosphate + adenine. It functions in the pathway purine metabolism; AMP biosynthesis via salvage pathway; AMP from adenine: step 1/1. Its function is as follows. Catalyzes a salvage reaction resulting in the formation of AMP, that is energically less costly than de novo synthesis. The chain is Adenine phosphoribosyltransferase from Sulfurovum sp. (strain NBC37-1).